The sequence spans 570 residues: Double-stranded RNA-binding protein Staufen homolog 2 (570 aa).

Positions 8–75 (TPVCLVNELA…ANKALTESTL (68 aa)) constitute a DRBM 1 domain. Disordered stretches follow at residues 71 to 94 (TEST…PGSI) and 178 to 203 (ALQN…DDKD). The span at 83–94 (PKSNVNNNPGSI) shows a compositional bias: polar residues. The 87-residue stretch at 95–181 (TPTVELNGLA…AMKALQALQN (87 aa)) folds into the DRBM 2 domain. Serine 188 bears the Phosphoserine mark. A compositionally biased stretch (basic and acidic residues) spans 194-203 (SGKEMDDDKD). 2 DRBM domains span residues 207-274 (SEIS…ELKK) and 307-375 (NPIS…QLGY). 2 short sequence motifs (nuclear localization signal) span residues 273–291 (KKLP…FKKR) and 373–412 (LGYK…PKGI). Positions 381–413 (LQDPLDKTGENKGWSGPKPGFPEPTNNTPKGIL) are disordered. The required for dendritic transport stretch occupies residues 381-570 (LQDPLDKTGE…QDCKKSKSAI (190 aa)). Position 395 is a phosphoserine (serine 395). Residue threonine 405 is modified to Phosphothreonine. Residues serine 416, serine 426, serine 440, serine 455, and serine 492 each carry the phosphoserine modification. A disordered region spans residues 545-570 (LREKADNNQAKPASISQDCKKSKSAI). Residues 551–561 (NNQAKPASISQ) are compositionally biased toward polar residues.

Interacts with microtubules. Isoform 2 and isoform 3 may also interact with ribosomes, and this association is independent of translation. Identified in a mRNP complex, at least composed of DHX9, DDX3X, ELAVL1, HNRNPU, IGF2BP1, ILF3, PABPC1, PCBP2, PTBP2, STAU1, STAU2, SYNCRIP and YBX1. Interacts with the exportin XPO5. This requires RNA and RAN bound to GTP. Interacts with TRIM71 (via NHL repeats) in an RNA-dependent manner. As to expression, expressed in brain and neurons, where isoform 2 and isoform 3 appear to be the most abundant. Expressed at the neuromuscular junction of the extensor digitorum longus, tibialis anterior and soleus muscles. Expression at neuromuscular junctions is most pronounced in slow-twitch muscle. Also weakly expressed in heart, kidney, ovary and testis.

Its subcellular location is the cytoplasm. The protein localises to the nucleus. It localises to the nucleolus. It is found in the endoplasmic reticulum. RNA-binding protein required for the microtubule-dependent transport of neuronal RNA from the cell body to the dendrite. As protein synthesis occurs within the dendrite, the localization of specific mRNAs to dendrites may be a prerequisite for neurite outgrowth and plasticity at sites distant from the cell body. This Mus musculus (Mouse) protein is Double-stranded RNA-binding protein Staufen homolog 2 (Stau2).